A 69-amino-acid polypeptide reads, in one-letter code: Purkinje cell protein 4-like protein 1 (69 aa).

Residues 1 to 15 (MSELNTKTSPATNQA) are compositionally biased toward polar residues. Residues 1-47 (MSELNTKTSPATNQAPGPEEKGKAGSAKKTEDEEEEIDIDLTAPETE) are disordered. T8 is subject to Phosphothreonine. Residues 18-31 (PEEKGKAGSAKKTE) are compositionally biased toward basic and acidic residues. In terms of domain architecture, IQ spans 46–69 (TEKAALAIQGKFRRFQKRKKDPSS).

The protein belongs to the PCP4 family.

In Bos taurus (Bovine), this protein is Purkinje cell protein 4-like protein 1 (PCP4L1).